Reading from the N-terminus, the 277-residue chain is Release factor glutamine methyltransferase (277 aa).

Residues 117-121 (GTGTG), Asp-140, Trp-168, and Asn-183 each bind S-adenosyl-L-methionine. Residue 183–186 (NPPY) participates in substrate binding.

The protein belongs to the protein N5-glutamine methyltransferase family. PrmC subfamily.

The catalysed reaction is L-glutaminyl-[peptide chain release factor] + S-adenosyl-L-methionine = N(5)-methyl-L-glutaminyl-[peptide chain release factor] + S-adenosyl-L-homocysteine + H(+). Methylates the class 1 translation termination release factors RF1/PrfA and RF2/PrfB on the glutamine residue of the universally conserved GGQ motif. The chain is Release factor glutamine methyltransferase from Salmonella typhimurium (strain LT2 / SGSC1412 / ATCC 700720).